The primary structure comprises 549 residues: Fas-activated serine/threonine kinase (549 aa).

The tract at residues 1–30 is disordered; that stretch reads MRRPRGEPGPRAPRPTEGATCAGPGESWSP. One can recognise an RAP domain in the interval 477 to 535; it reads VVLVLRERWHFCRDGRVLLGSRALRERHLGLMGYQLLPLPFEELESQRGLPQLKSYLRQ.

This sequence belongs to the FAST protein kinase family. Interacts with TIA1; the interactions leads to TIA1 phosphorylation. Interacts with TIAR. In terms of processing, autophosphorylated on serine/threonine residues. Activated by dephosphorylation. Expressed in heart, brain, placenta, lung, liver, skeletal muscle, kidney and pancreas.

It is found in the mitochondrion matrix. It carries out the reaction L-seryl-[Fas-activated protein] + ATP = O-phospho-L-seryl-[Fas-activated protein] + ADP + H(+). The enzyme catalyses L-threonyl-[Fas-activated protein] + ATP = O-phospho-L-threonyl-[Fas-activated protein] + ADP + H(+). It catalyses the reaction L-seryl-[protein] + ATP = O-phospho-L-seryl-[protein] + ADP + H(+). The catalysed reaction is L-threonyl-[protein] + ATP = O-phospho-L-threonyl-[protein] + ADP + H(+). Functionally, phosphorylates the splicing regulator TIA1, thereby promoting the inclusion of FAS exon 6, which leads to an mRNA encoding a pro-apoptotic form of the receptor. In terms of biological role, required for the biogenesis of some mitochondrial-encoded mRNAs, specifically stabilizes ND6 (NADH dehydrogenase complex subunit 6) mRNA, and regulates its levels. This chain is Fas-activated serine/threonine kinase (FASTK), found in Homo sapiens (Human).